A 771-amino-acid chain; its full sequence is Rho GTPase-activating protein 26 (771 aa).

In terms of domain architecture, BAR spans 7-262; sequence EFSDCYLDSP…MKENPHEHLA (256 aa). The PH domain occupies 265–369; it reads PFTMEGYLYV…WMEAMDGREP (105 aa). Positions 383 to 568 constitute a Rho-GAP domain; it reads AQLDNIGFSI…IIIENYEEMF (186 aa). Residues 575–712 form a disordered region; the sequence is PQTNSQLHLS…SSTSSDSSPV (138 aa). The span at 608-617 shows a compositional bias: basic and acidic residues; that stretch reads HSSEKEEKRN. Residues 618 to 637 are compositionally biased toward low complexity; the sequence is SVNSSAESVSSSNANSSVNS. Polar residues-rich tracts occupy residues 638-650 and 662-671; these read TCTQRSNMNNLNA and RPNSLLNPKN. 2 stretches are compositionally biased toward low complexity: residues 673 to 683 and 691 to 712; these read SGLLPSSLNPS and PMVSAPSSPMPTSSTSSDSSPV. One can recognise an SH3 domain in the interval 713-771; it reads SVPRKAKALYACKAEHDSELSFSAGTVFENVCPSQEPGWLEGTLNGKTGLIPENYVEFL.

It is found in the cell junction. The protein resides in the focal adhesion. The protein localises to the cytoplasm. It localises to the cytoskeleton. Its subcellular location is the endosome membrane. GTPase-activating protein for rhoa and cdc42. May be involved in the regulation of neosynthesized protein export through a Rab-endososomal dependent export route. This Xenopus laevis (African clawed frog) protein is Rho GTPase-activating protein 26 (arhgap26).